The sequence spans 329 residues: DNA-directed RNA polymerase subunit alpha (329 aa).

Positions 1 to 235 are alpha N-terminal domain (alpha-NTD); that stretch reads MQGSVIEFLK…EQLDAFVDLR (235 aa). Residues 249–329 form an alpha C-terminal domain (alpha-CTD) region; that stretch reads FDPILLRPVD…NWPPASIAED (81 aa).

This sequence belongs to the RNA polymerase alpha chain family. In terms of assembly, homodimer. The RNAP catalytic core consists of 2 alpha, 1 beta, 1 beta' and 1 omega subunit. When a sigma factor is associated with the core the holoenzyme is formed, which can initiate transcription.

It catalyses the reaction RNA(n) + a ribonucleoside 5'-triphosphate = RNA(n+1) + diphosphate. In terms of biological role, DNA-dependent RNA polymerase catalyzes the transcription of DNA into RNA using the four ribonucleoside triphosphates as substrates. This chain is DNA-directed RNA polymerase subunit alpha, found in Haemophilus ducreyi (strain 35000HP / ATCC 700724).